The following is a 314-amino-acid chain: 2-oxo-3-(phosphooxy)propyl 3-oxoalkanoate synthase (314 aa).

This sequence belongs to the AfsA family.

It carries out the reaction a medium-chain 3-oxoacyl-[ACP] + dihydroxyacetone phosphate = a (4-alkanoyl-5-oxo-2,5-dihydrofuran-3-yl)methyl phosphate + holo-[ACP] + H2O. In terms of biological role, involved of the biosynthesis of S.coelicolor butanolide 1 (SCB1), a gamma-butyrolactone that triggers antibiotic production. The chain is 2-oxo-3-(phosphooxy)propyl 3-oxoalkanoate synthase from Streptomyces coelicolor (strain ATCC BAA-471 / A3(2) / M145).